A 184-amino-acid polypeptide reads, in one-letter code: Probable chemoreceptor glutamine deamidase CheD (184 aa).

This sequence belongs to the CheD family.

It carries out the reaction L-glutaminyl-[protein] + H2O = L-glutamyl-[protein] + NH4(+). Functionally, probably deamidates glutamine residues to glutamate on methyl-accepting chemotaxis receptors (MCPs), playing an important role in chemotaxis. This chain is Probable chemoreceptor glutamine deamidase CheD, found in Rhizobium leguminosarum bv. trifolii (strain WSM2304).